The primary structure comprises 479 residues: Glutamate--tRNA ligase (479 aa).

The short motif at 21–31 (PSPTGYLHVGG) is the 'HIGH' region element. Positions 248-252 (KLSKR) match the 'KMSKS' region motif. Lys-251 contacts ATP.

It belongs to the class-I aminoacyl-tRNA synthetase family. Glutamate--tRNA ligase type 1 subfamily. In terms of assembly, monomer.

It is found in the cytoplasm. It carries out the reaction tRNA(Glu) + L-glutamate + ATP = L-glutamyl-tRNA(Glu) + AMP + diphosphate. Functionally, catalyzes the attachment of glutamate to tRNA(Glu) in a two-step reaction: glutamate is first activated by ATP to form Glu-AMP and then transferred to the acceptor end of tRNA(Glu). In Actinobacillus pleuropneumoniae serotype 7 (strain AP76), this protein is Glutamate--tRNA ligase.